The sequence spans 160 residues: Nucleotide-binding protein TERTU_3542 (160 aa).

It belongs to the YajQ family.

In terms of biological role, nucleotide-binding protein. The protein is Nucleotide-binding protein TERTU_3542 of Teredinibacter turnerae (strain ATCC 39867 / T7901).